We begin with the raw amino-acid sequence, 100 residues long: MGFTNLVSLAALIEKAFPIRYTPAGIPVLDIILKHESWQEENGQQCLVQLEIPARILGRQAEEWQYRQGDCATVEGFLAQKSRRSLMPMLRIQNIKEYKG.

The 96-residue stretch at 4-99 (TNLVSLAALI…LRIQNIKEYK (96 aa)) folds into the SSB domain.

The protein belongs to the PriB family. In terms of assembly, homodimer. Component of the replication restart primosome. Primosome assembly occurs via a 'hand-off' mechanism. PriA binds to replication forks, subsequently PriB then DnaT bind; DnaT then displaces ssDNA to generate the helicase loading substrate. Interacts with PriA with high affinity, independent of DNA presence.

With respect to regulation, priA:PriB complex-catalyzed duplex DNA winding is inhibited by CGS 15943 (CHEBI:131351); PriA is the drug target. Functionally, stimulates the DNA unwinding activity of PriA helicase, which does not seem to require single-stranded (ss)DNA-binding by PriB. Activates DNA-dependent ATP hydrolysis catalyzed by PriA. Weakly binds ssDNA. Weakly binds double-stranded (ds)DNA, a partial duplex DNA with a 3' ssDNA overhang, and a forked DNA structure with fully duplex leading and lagging strand arms in vitro. Involved in the restart of stalled replication forks, which reloads the replicative helicase on sites other than the origin of replication; the PriA-PriB pathway is the major replication restart pathway. During primosome assembly it facilitates complex formation between PriA and DnaT on DNA; stabilizes PriA on DNA. Stimulates the DNA unwinding activity of PriA helicase. The chain is Replication restart protein PriB from Neisseria gonorrhoeae (strain ATCC 700825 / FA 1090).